The chain runs to 311 residues: Putative tenascin-XA (311 aa).

Disordered regions lie at residues 1-47 and 124-150; these read MEDK…EPRL and LSAEGTTGLAPAGQTSEESRPRLSQLS. Fibronectin type-III domains follow at residues 41–135, 145–249, and 250–311; these read PPEE…LAPA, RLSQ…SPRD, and LQFS…SCVH.

In terms of tissue distribution, expressed in the adrenal gland.

The sequence is that of Putative tenascin-XA (TNXA) from Homo sapiens (Human).